Here is a 142-residue protein sequence, read N- to C-terminus: Truncated non-functional hemagglutinin-esterase homolog (142 aa).

The Virion surface portion of the chain corresponds to 1–117 (MNFTVPVQAI…ESVDVISSSY (117 aa)). An N-linked (GlcNAc...) asparagine; by host glycan is attached at N2. C28 and C33 are disulfide-bonded. N46 and N67 each carry an N-linked (GlcNAc...) asparagine; by host glycan. A disulfide bridge links C70 with C95. The chain crosses the membrane as a helical span at residues 118 to 138 (FVATWVLLVVVIILVFIIISF). The Intravirion portion of the chain corresponds to 139–142 (CISN).

It belongs to the influenza type C/coronaviruses hemagglutinin-esterase family. As to quaternary structure, homodimer. Post-translationally, N-glycosylated.

The protein resides in the virion membrane. Its subcellular location is the host cell membrane. The sequence is that of Truncated non-functional hemagglutinin-esterase homolog (HE) from Berne virus (BEV).